We begin with the raw amino-acid sequence, 388 residues long: S-adenosylmethionine synthase (388 aa).

Histidine 16 serves as a coordination point for ATP. Aspartate 18 is a binding site for Mg(2+). A K(+)-binding site is contributed by glutamate 44. Residues glutamate 57 and glutamine 100 each contribute to the L-methionine site. The tract at residues 100-110 (QSPDIAQGVDK) is flexible loop. ATP is bound by residues 167-169 (DAK), 233-234 (RF), aspartate 242, 248-249 (RK), alanine 265, and lysine 269. Position 242 (aspartate 242) interacts with L-methionine. Position 273 (lysine 273) interacts with L-methionine.

It belongs to the AdoMet synthase family. In terms of assembly, homotetramer; dimer of dimers. It depends on Mg(2+) as a cofactor. K(+) serves as cofactor.

The protein localises to the cytoplasm. The catalysed reaction is L-methionine + ATP + H2O = S-adenosyl-L-methionine + phosphate + diphosphate. It functions in the pathway amino-acid biosynthesis; S-adenosyl-L-methionine biosynthesis; S-adenosyl-L-methionine from L-methionine: step 1/1. In terms of biological role, catalyzes the formation of S-adenosylmethionine (AdoMet) from methionine and ATP. The overall synthetic reaction is composed of two sequential steps, AdoMet formation and the subsequent tripolyphosphate hydrolysis which occurs prior to release of AdoMet from the enzyme. In Polynucleobacter asymbioticus (strain DSM 18221 / CIP 109841 / QLW-P1DMWA-1) (Polynucleobacter necessarius subsp. asymbioticus), this protein is S-adenosylmethionine synthase.